Here is a 1397-residue protein sequence, read N- to C-terminus: DNA-directed RNA polymerase subunit beta' (1397 aa).

Residues C71, C73, C86, and C89 each coordinate Zn(2+). Mg(2+) is bound by residues D462, D464, and D466. Zn(2+)-binding residues include C811, C885, C892, and C895. The tract at residues 1368–1397 (QNRDDKILEDQGGATPTASTEIKEPAEGAA) is disordered. Residues 1388–1397 (EIKEPAEGAA) show a composition bias toward basic and acidic residues.

Belongs to the RNA polymerase beta' chain family. As to quaternary structure, the RNAP catalytic core consists of 2 alpha, 1 beta, 1 beta' and 1 omega subunit. When a sigma factor is associated with the core the holoenzyme is formed, which can initiate transcription. Requires Mg(2+) as cofactor. The cofactor is Zn(2+).

It carries out the reaction RNA(n) + a ribonucleoside 5'-triphosphate = RNA(n+1) + diphosphate. In terms of biological role, DNA-dependent RNA polymerase catalyzes the transcription of DNA into RNA using the four ribonucleoside triphosphates as substrates. This is DNA-directed RNA polymerase subunit beta' from Parvibaculum lavamentivorans (strain DS-1 / DSM 13023 / NCIMB 13966).